Reading from the N-terminus, the 280-residue chain is Tryptophan 2,3-dioxygenase (280 aa).

Substrate is bound by residues 47–51 (FVVQH), Tyr109, and Arg113. His236 serves as a coordination point for heme. A substrate-binding site is contributed by Thr250.

It belongs to the tryptophan 2,3-dioxygenase family. As to quaternary structure, homotetramer. Heme is required as a cofactor.

The catalysed reaction is L-tryptophan + O2 = N-formyl-L-kynurenine. Its pathway is amino-acid degradation; L-tryptophan degradation via kynurenine pathway; L-kynurenine from L-tryptophan: step 1/2. Heme-dependent dioxygenase that catalyzes the oxidative cleavage of the L-tryptophan (L-Trp) pyrrole ring and converts L-tryptophan to N-formyl-L-kynurenine. Catalyzes the oxidative cleavage of the indole moiety. In Serratia proteamaculans (strain 568), this protein is Tryptophan 2,3-dioxygenase.